Here is a 582-residue protein sequence, read N- to C-terminus: 2-succinyl-5-enolpyruvyl-6-hydroxy-3-cyclohexene-1-carboxylate synthase (582 aa).

This sequence belongs to the TPP enzyme family. MenD subfamily. As to quaternary structure, homodimer. It depends on Mg(2+) as a cofactor. Mn(2+) serves as cofactor. The cofactor is thiamine diphosphate.

It carries out the reaction isochorismate + 2-oxoglutarate + H(+) = 5-enolpyruvoyl-6-hydroxy-2-succinyl-cyclohex-3-ene-1-carboxylate + CO2. The protein operates within quinol/quinone metabolism; 1,4-dihydroxy-2-naphthoate biosynthesis; 1,4-dihydroxy-2-naphthoate from chorismate: step 2/7. Its pathway is cofactor biosynthesis; phylloquinone biosynthesis. In terms of biological role, catalyzes the thiamine diphosphate-dependent decarboxylation of 2-oxoglutarate and the subsequent addition of the resulting succinic semialdehyde-thiamine pyrophosphate anion to isochorismate to yield 2-succinyl-5-enolpyruvyl-6-hydroxy-3-cyclohexene-1-carboxylate (SEPHCHC). The sequence is that of 2-succinyl-5-enolpyruvyl-6-hydroxy-3-cyclohexene-1-carboxylate synthase from Trichodesmium erythraeum (strain IMS101).